We begin with the raw amino-acid sequence, 398 residues long: Dihydrolipoyllysine-residue acetyltransferase component of acetoin cleaving system (398 aa).

Residues 2 to 77 (AVKVVMPKLG…PPGTAICYIG (76 aa)) enclose the Lipoyl-binding domain. Residue Lys43 is modified to N6-lipoyllysine. Residues 118–155 (KISPVARKIAEKAGLDLKQLKGTGPGGRIVKDDVTKAL) form the Peripheral subunit-binding (PSBD) domain. Catalysis depends on residues His371 and Asp375.

This sequence belongs to the 2-oxoacid dehydrogenase family. (R)-lipoate is required as a cofactor.

It catalyses the reaction N(6)-[(R)-dihydrolipoyl]-L-lysyl-[protein] + acetyl-CoA = N(6)-[(R)-S(8)-acetyldihydrolipoyl]-L-lysyl-[protein] + CoA. It functions in the pathway ketone degradation; acetoin degradation. The chain is Dihydrolipoyllysine-residue acetyltransferase component of acetoin cleaving system (acoC) from Bacillus subtilis (strain 168).